Consider the following 159-residue polypeptide: Transcriptional repressor NrdR (159 aa).

A zinc finger spans residues 3–34; that stretch reads CPFCNAADSKVIDSRLAAEGCQIRRRRECISC. One can recognise an ATP-cone domain in the interval 49–139; it reads PRVIKSNGKN…VYQDFQDVEA (91 aa).

Belongs to the NrdR family. Zn(2+) is required as a cofactor.

In terms of biological role, negatively regulates transcription of bacterial ribonucleotide reductase nrd genes and operons by binding to NrdR-boxes. This chain is Transcriptional repressor NrdR, found in Acinetobacter baylyi (strain ATCC 33305 / BD413 / ADP1).